The primary structure comprises 125 residues: uncharacterized protein (125 aa).

The 63-residue stretch at 1–63 (MSQSIEDYLE…YEPYIGITLT (63 aa)) folds into the HTH dtxR-type domain.

Belongs to the DtxR/MntR family.

This is an uncharacterized protein from Methanocaldococcus jannaschii (strain ATCC 43067 / DSM 2661 / JAL-1 / JCM 10045 / NBRC 100440) (Methanococcus jannaschii).